The chain runs to 261 residues: tRNA pseudouridine synthase A (261 aa).

Asp-52 acts as the Nucleophile in catalysis. Tyr-110 is a substrate binding site.

It belongs to the tRNA pseudouridine synthase TruA family. Homodimer.

It carries out the reaction uridine(38/39/40) in tRNA = pseudouridine(38/39/40) in tRNA. In terms of biological role, formation of pseudouridine at positions 38, 39 and 40 in the anticodon stem and loop of transfer RNAs. This Blochmanniella pennsylvanica (strain BPEN) protein is tRNA pseudouridine synthase A.